A 560-amino-acid chain; its full sequence is Serine palmitoyltransferase 2 (560 aa).

A helical membrane pass occupies residues 65–85 (PMLVAVLTYVGYGVLTLFGYL). Position 377 is an N6-(pyridoxal phosphate)lysine (Lys377).

It belongs to the class-II pyridoxal-phosphate-dependent aminotransferase family. Component of the serine palmitoyltransferase (SPT) complex, which is composed of SPTLC1, SPTLC2 or SPTLC3 and SPTSSA or SPTSSB. The heterodimer consisting of SPTLC1 and SPTLC2/SPTLC3 forms the catalytic core of the enzyme, while SPTSSA or SPTSSB subunits determine substrate specificity. SPT also interacts with ORMDL proteins, especially ORMDL3, which negatively regulate SPT activity in the presence of ceramides. Forms dimers of heterodimers with SPTLC1. Pyridoxal 5'-phosphate serves as cofactor. As to expression, expressed in astrocytes.

The protein localises to the endoplasmic reticulum membrane. It carries out the reaction L-serine + hexadecanoyl-CoA + H(+) = 3-oxosphinganine + CO2 + CoA. The catalysed reaction is octadecanoyl-CoA + L-serine + H(+) = 3-oxoeicosasphinganine + CO2 + CoA. It functions in the pathway lipid metabolism; sphingolipid metabolism. Its activity is regulated as follows. SPT complex catalytic activity is negatively regulated by ORMDL proteins, including ORMDL3, in the presence of ceramides. This mechanism allows to maintain ceramide levels at sufficient concentrations for the production of complex sphingolipids, but which prevents the accumulation of ceramides to levels that trigger apoptosis. Functionally, component of the serine palmitoyltransferase multisubunit enzyme (SPT) that catalyzes the initial and rate-limiting step in sphingolipid biosynthesis by condensing L-serine and activated acyl-CoA (most commonly palmitoyl-CoA) to form long-chain bases. The SPT complex is composed of SPTLC1, SPTLC2 or SPTLC3 and SPTSSA or SPTSSB. Within this complex, the heterodimer consisting of SPTLC1 and SPTLC2/SPTLC3 forms the catalytic core. The composition of the serine palmitoyltransferase (SPT) complex determines the substrate preference. The SPTLC1-SPTLC2-SPTSSA complex shows a strong preference for C16-CoA substrate, while the SPTLC1-SPTLC3-SPTSSA isozyme uses both C14-CoA and C16-CoA as substrates, with a slight preference for C14-CoA. The SPTLC1-SPTLC2-SPTSSB complex shows a strong preference for C18-CoA substrate, while the SPTLC1-SPTLC3-SPTSSB isozyme displays an ability to use a broader range of acyl-CoAs, without apparent preference. Crucial for adipogenesis. The sequence is that of Serine palmitoyltransferase 2 from Rattus norvegicus (Rat).